Reading from the N-terminus, the 1379-residue chain is DNA-directed RNA polymerase subunit beta'' (1379 aa).

Positions 220, 293, 300, and 303 each coordinate Zn(2+).

It belongs to the RNA polymerase beta' chain family. RpoC2 subfamily. In plastids the minimal PEP RNA polymerase catalytic core is composed of four subunits: alpha, beta, beta', and beta''. When a (nuclear-encoded) sigma factor is associated with the core the holoenzyme is formed, which can initiate transcription. Requires Zn(2+) as cofactor.

The protein resides in the plastid. The protein localises to the chloroplast. It catalyses the reaction RNA(n) + a ribonucleoside 5'-triphosphate = RNA(n+1) + diphosphate. Its function is as follows. DNA-dependent RNA polymerase catalyzes the transcription of DNA into RNA using the four ribonucleoside triphosphates as substrates. The sequence is that of DNA-directed RNA polymerase subunit beta'' from Capsella bursa-pastoris (Shepherd's purse).